A 142-amino-acid chain; its full sequence is Serine protease inhibitor (142 aa).

Ser1 bears the N-acetylserine mark.

Its function is as follows. Serine protease inhibitor. Active against beta-trypsin and alpha-chymotrypsin with dissociation constants of 0.35 nM and 40 nM respectively. Inhibits factor XIa, but not other enzymes involved in coagulation and fibrinolysis. Does not inhibit subtilisin, lysyl endopeptidase, arginyl endopeptidase or papain. This Lentinula edodes (Shiitake mushroom) protein is Serine protease inhibitor.